The sequence spans 182 residues: Ribosome maturation factor RimM (182 aa).

Residues 102–182 (EEGDYYWKDL…TIEVDWDPGF (81 aa)) form the PRC barrel domain.

It belongs to the RimM family. In terms of assembly, binds ribosomal protein uS19.

It is found in the cytoplasm. An accessory protein needed during the final step in the assembly of 30S ribosomal subunit, possibly for assembly of the head region. Essential for efficient processing of 16S rRNA. May be needed both before and after RbfA during the maturation of 16S rRNA. It has affinity for free ribosomal 30S subunits but not for 70S ribosomes. In Klebsiella pneumoniae (strain 342), this protein is Ribosome maturation factor RimM.